We begin with the raw amino-acid sequence, 249 residues long: Putative TrmH family tRNA/rRNA methyltransferase (249 aa).

S-adenosyl-L-methionine is bound by residues glycine 196, isoleucine 216, and leucine 225.

Belongs to the class IV-like SAM-binding methyltransferase superfamily. RNA methyltransferase TrmH family.

This Staphylococcus haemolyticus (strain JCSC1435) protein is Putative TrmH family tRNA/rRNA methyltransferase.